The chain runs to 82 residues: Turripeptide Gsg9.1 (82 aa).

The signal sequence occupies residues 1–23 (MMAKLMITVMTVFFLSLQQGADG). A propeptide spanning residues 24-46 (LFERWRKNQMAASRIMGNLITAR) is cleaved from the precursor. 4-hydroxyproline is present on residues proline 49 and proline 50. 3 disulfide bridges follow: cysteine 53–cysteine 68, cysteine 58–cysteine 72, and cysteine 64–cysteine 79. 4-carboxyglutamate is present on residues glutamate 60 and glutamate 63.

The protein belongs to the Pg turripeptide superfamily. As to expression, expressed by the venom duct.

The protein resides in the secreted. The polypeptide is Turripeptide Gsg9.1 (Gemmula sogodensis (Gem-turris)).